Consider the following 169-residue polypeptide: Ribosome maturation factor RimM (169 aa).

The region spanning 94–168 (EEGQYYYHQI…KVIVELLEGL (75 aa)) is the PRC barrel domain.

Belongs to the RimM family. Binds ribosomal protein uS19.

The protein resides in the cytoplasm. Its function is as follows. An accessory protein needed during the final step in the assembly of 30S ribosomal subunit, possibly for assembly of the head region. Essential for efficient processing of 16S rRNA. May be needed both before and after RbfA during the maturation of 16S rRNA. It has affinity for free ribosomal 30S subunits but not for 70S ribosomes. The chain is Ribosome maturation factor RimM from Limosilactobacillus fermentum (strain NBRC 3956 / LMG 18251) (Lactobacillus fermentum).